A 196-amino-acid polypeptide reads, in one-letter code: Phosphoheptose isomerase (196 aa).

The SIS domain maps to 36–196; sequence MTNCLINGGK…GIDALLLGVE (161 aa). 51–53 lines the substrate pocket; that stretch reads NGG. Positions 60 and 64 each coordinate Zn(2+). Substrate contacts are provided by residues Glu64, 93 to 94, 119 to 121, Ser124, and Gln174; these read ND and STS. Residues Gln174 and His182 each contribute to the Zn(2+) site.

The protein belongs to the SIS family. GmhA subfamily. Homotetramer. The cofactor is Zn(2+).

The protein localises to the cytoplasm. It carries out the reaction 2 D-sedoheptulose 7-phosphate = D-glycero-alpha-D-manno-heptose 7-phosphate + D-glycero-beta-D-manno-heptose 7-phosphate. It participates in carbohydrate biosynthesis; D-glycero-D-manno-heptose 7-phosphate biosynthesis; D-glycero-alpha-D-manno-heptose 7-phosphate and D-glycero-beta-D-manno-heptose 7-phosphate from sedoheptulose 7-phosphate: step 1/1. Catalyzes the isomerization of sedoheptulose 7-phosphate in D-glycero-D-manno-heptose 7-phosphate. The polypeptide is Phosphoheptose isomerase (Dechloromonas aromatica (strain RCB)).